The sequence spans 90 residues: Cell division topological specificity factor (90 aa).

Positions 1–21 (MAGFWSKIFGNDEKPSSAQTA) are disordered. Residues 10-21 (GNDEKPSSAQTA) show a composition bias toward basic and acidic residues.

It belongs to the MinE family.

Prevents the cell division inhibition by proteins MinC and MinD at internal division sites while permitting inhibition at polar sites. This ensures cell division at the proper site by restricting the formation of a division septum at the midpoint of the long axis of the cell. The sequence is that of Cell division topological specificity factor from Acinetobacter baylyi (strain ATCC 33305 / BD413 / ADP1).